Here is a 334-residue protein sequence, read N- to C-terminus: Protein-methionine-sulfoxide reductase catalytic subunit MsrP (334 aa).

The tat-type signal signal peptide spans 1 to 44 (MKKNQFLKESDVTAESVFFMKRRQVLKALGISAAALSLPHAAHA). Residues Asn-88, 91–92 (YE), Cys-146, Thr-181, Asn-233, Arg-238, and 249–251 (GIK) each bind Mo-molybdopterin.

This sequence belongs to the MsrP family. In terms of assembly, heterodimer of a catalytic subunit (MsrP) and a heme-binding subunit (MsrQ). It depends on Mo-molybdopterin as a cofactor. Post-translationally, predicted to be exported by the Tat system. The position of the signal peptide cleavage has not been experimentally proven.

It is found in the periplasm. It carries out the reaction L-methionyl-[protein] + a quinone + H2O = L-methionyl-(S)-S-oxide-[protein] + a quinol. The enzyme catalyses L-methionyl-[protein] + a quinone + H2O = L-methionyl-(R)-S-oxide-[protein] + a quinol. Part of the MsrPQ system that repairs oxidized periplasmic proteins containing methionine sulfoxide residues (Met-O), using respiratory chain electrons. Thus protects these proteins from oxidative-stress damage caused by reactive species of oxygen and chlorine generated by the host defense mechanisms. MsrPQ is essential for the maintenance of envelope integrity under bleach stress, rescuing a wide series of structurally unrelated periplasmic proteins from methionine oxidation, including the primary periplasmic chaperone SurA and the lipoprotein Pal. The catalytic subunit MsrP is non-stereospecific, being able to reduce both (R-) and (S-) diastereoisomers of methionine sulfoxide. This Escherichia coli O9:H4 (strain HS) protein is Protein-methionine-sulfoxide reductase catalytic subunit MsrP.